Reading from the N-terminus, the 269-residue chain is Extracellular metalloprotease UREG_07765 (269 aa).

An N-terminal signal peptide occupies residues 1-18; the sequence is MRLSVSLLALAFGSLVAA. The N-linked (GlcNAc...) asparagine glycan is linked to Asn179. His191 contacts Zn(2+). The active site involves Glu192. Zn(2+) is bound at residue His195. A disordered region spans residues 207 to 227; it reads VSDTPPQRSSTQGCPSSRDSC. The segment covering 210-225 has biased composition (polar residues); that stretch reads TPPQRSSTQGCPSSRD. Cys220 and Cys246 are oxidised to a cystine.

It belongs to the peptidase M43B family.

It localises to the secreted. In terms of biological role, secreted metalloproteinase that allows assimilation of proteinaceous substrates. The chain is Extracellular metalloprotease UREG_07765 from Uncinocarpus reesii (strain UAMH 1704).